The primary structure comprises 2026 residues: E3 ubiquitin-protein ligase TRIP12 (2026 aa).

Composition is skewed to polar residues over residues 1–10, 32–42, and 73–84; these read MSNRPNSNPG, GRNSLSLSVGS, and SSVSEPNITFSP. Residues 1–437 form a disordered region; that stretch reads MSNRPNSNPG…SGESESDDSE (437 aa). 4 stretches are compositionally biased toward low complexity: residues 94 to 112, 135 to 161, 171 to 188, and 199 to 241; these read SSHF…AISP, AEPA…STPS, LLSS…SAAG, and AAKP…SSAA. The span at 359-371 shows a compositional bias: polar residues; that stretch reads QKTTGSCASTSRR. Residues 379–391 are compositionally biased toward basic and acidic residues; the sequence is GAAEARRQEKMAD. Residues 392 to 404 show a composition bias toward polar residues; it reads SDNNQDGANSSAA. Low complexity predominate over residues 412 to 430; the sequence is GASASSSVAGAVGMTTSGE. The region spanning 789–876 is the WWE domain; the sequence is MLKKGSAQTT…DPELAKCFIK (88 aa). Disordered regions lie at residues 1008–1123 and 1441–1470; these read SNVT…SVSN and GCKD…KQDE. Positions 1040–1053 are enriched in basic residues; it reads KRKRLPKRGPRRPK. The span at 1056–1065 shows a compositional bias: basic and acidic residues; it reads PPRDDDKVDN. Residues 1068 to 1079 are compositionally biased toward low complexity; that stretch reads KSPTTTQSPKSS. Positions 1094–1104 are enriched in polar residues; sequence TQANSANSEPS. Residues 1530 to 1604 are K-box; the sequence is EIIPTGEFIN…AMQRLLDTNP (75 aa). Residues 1919 to 2026 enclose the HECT domain; it reads PDHGYTHDSR…REGQQSFHLS (108 aa). The active-site Glycyl thioester intermediate is the C1993.

It belongs to the UPL family. K-HECT subfamily.

It localises to the nucleus. The protein resides in the nucleoplasm. The enzyme catalyses S-ubiquitinyl-[E2 ubiquitin-conjugating enzyme]-L-cysteine + [acceptor protein]-L-lysine = [E2 ubiquitin-conjugating enzyme]-L-cysteine + N(6)-ubiquitinyl-[acceptor protein]-L-lysine.. Its pathway is protein modification; protein ubiquitination. Functionally, E3 ubiquitin-protein ligase involved in ubiquitin fusion degradation (UFD) pathway and regulation of DNA repair. Part of the ubiquitin fusion degradation (UFD) pathway, a process that mediates ubiquitination of protein at their N-terminus, regardless of the presence of lysine residues in target proteins. Acts as a key regulator of DNA damage response by acting as a suppressor of RNF168, an E3 ubiquitin-protein ligase that promotes accumulation of 'Lys-63'-linked histone H2A and H2AX at DNA damage sites, thereby acting as a guard against excessive spreading of ubiquitinated chromatin at damaged chromosomes. The chain is E3 ubiquitin-protein ligase TRIP12 (trip12) from Danio rerio (Zebrafish).